Consider the following 248-residue polypeptide: DNA repair protein RecO (248 aa).

Belongs to the RecO family.

Involved in DNA repair and RecF pathway recombination. This Thermoanaerobacter sp. (strain X514) protein is DNA repair protein RecO.